The chain runs to 328 residues: G2/mitotic-specific cyclin-2 (328 aa).

It belongs to the cyclin family. Cyclin AB subfamily. Interacts with the CDC2 protein kinase to form a serine/threonine kinase holoenzyme complex also known as maturation promoting factor (MPF). The cyclin subunit imparts substrate specificity to the complex. Only expressed in organs with dividing cells.

Its function is as follows. Essential for the control of the cell cycle at the G2/M (mitosis) transition. The polypeptide is G2/mitotic-specific cyclin-2 (Medicago sativa (Alfalfa)).